Here is a 256-residue protein sequence, read N- to C-terminus: Thiazole synthase (256 aa).

Catalysis depends on K98, which acts as the Schiff-base intermediate with DXP. 1-deoxy-D-xylulose 5-phosphate contacts are provided by residues G159, 185-186, and 207-208; these read AG and NT.

Belongs to the ThiG family. In terms of assembly, homotetramer. Forms heterodimers with either ThiH or ThiS.

Its subcellular location is the cytoplasm. The catalysed reaction is [ThiS sulfur-carrier protein]-C-terminal-Gly-aminoethanethioate + 2-iminoacetate + 1-deoxy-D-xylulose 5-phosphate = [ThiS sulfur-carrier protein]-C-terminal Gly-Gly + 2-[(2R,5Z)-2-carboxy-4-methylthiazol-5(2H)-ylidene]ethyl phosphate + 2 H2O + H(+). The protein operates within cofactor biosynthesis; thiamine diphosphate biosynthesis. In terms of biological role, catalyzes the rearrangement of 1-deoxy-D-xylulose 5-phosphate (DXP) to produce the thiazole phosphate moiety of thiamine. Sulfur is provided by the thiocarboxylate moiety of the carrier protein ThiS. In vitro, sulfur can be provided by H(2)S. This chain is Thiazole synthase, found in Aliivibrio fischeri (strain ATCC 700601 / ES114) (Vibrio fischeri).